The primary structure comprises 198 residues: Ion-translocating oxidoreductase complex subunit B (198 aa).

The tract at residues M1–S26 is hydrophobic. A 4Fe-4S domain is found at E32–V90. Positions 49, 52, 57, 73, 114, 117, 120, 124, 144, 147, 150, and 154 each coordinate [4Fe-4S] cluster. 4Fe-4S ferredoxin-type domains lie at K105 to K134 and A135 to L164.

Belongs to the 4Fe4S bacterial-type ferredoxin family. RnfB subfamily. As to quaternary structure, the complex is composed of six subunits: RnfA, RnfB, RnfC, RnfD, RnfE and RnfG. [4Fe-4S] cluster is required as a cofactor.

It is found in the cell inner membrane. Part of a membrane-bound complex that couples electron transfer with translocation of ions across the membrane. The polypeptide is Ion-translocating oxidoreductase complex subunit B (Vibrio vulnificus (strain CMCP6)).